Here is a 199-residue protein sequence, read N- to C-terminus: NAD(P)H dehydrogenase (quinone) (199 aa).

Residues 4–190 (VLVLYYSAYG…AGARYQGKTI (187 aa)) enclose the Flavodoxin-like domain. FMN contacts are provided by residues 10 to 15 (SAYGHI) and 78 to 80 (TRF). Tyr-12 provides a ligand contact to NAD(+). Trp-98 is a substrate binding site. FMN contacts are provided by residues 113–119 (STATQHG) and His-134.

This sequence belongs to the WrbA family. It depends on FMN as a cofactor.

The catalysed reaction is a quinone + NADH + H(+) = a quinol + NAD(+). It carries out the reaction a quinone + NADPH + H(+) = a quinol + NADP(+). The chain is NAD(P)H dehydrogenase (quinone) from Rhodopseudomonas palustris (strain TIE-1).